The primary structure comprises 298 residues: MGNLKKLLRVSDLSDEDVENLLILANKYMAQEASDEVLRGKVIVNLFFESSTRTLLAFEIAEKALGAISVTLNVAMSSICKGESISDTMSTMAAMGTDLVVVRSDQSCMVDEIAKRAGDCLVINAGDGNHEHPTQAITDYATIRSLKGGEVRGLKVAICGDVFHSRVARSNIRLLSRYGADIRVVTPMRVDHVPDGVSLVTRSLEEGIEGADVIMLLRIQRERMTNGDFMLDKEYSRLYMLDEKRLSLAKDDVIVMHPGPMNRGVEISDEVADNHSSVLFQVKVGAAVRKAVLHYMLG.

The carbamoyl phosphate site is built by Arg53 and Thr54. Position 81 (Lys81) interacts with L-aspartate. Residues Arg103, His132, and Gln135 each contribute to the carbamoyl phosphate site. 2 residues coordinate L-aspartate: Arg166 and Arg218. Gly259 and Pro260 together coordinate carbamoyl phosphate.

This sequence belongs to the aspartate/ornithine carbamoyltransferase superfamily. ATCase family. As to quaternary structure, heterododecamer (2C3:3R2) of six catalytic PyrB chains organized as two trimers (C3), and six regulatory PyrI chains organized as three dimers (R2).

The catalysed reaction is carbamoyl phosphate + L-aspartate = N-carbamoyl-L-aspartate + phosphate + H(+). It functions in the pathway pyrimidine metabolism; UMP biosynthesis via de novo pathway; (S)-dihydroorotate from bicarbonate: step 2/3. In terms of biological role, catalyzes the condensation of carbamoyl phosphate and aspartate to form carbamoyl aspartate and inorganic phosphate, the committed step in the de novo pyrimidine nucleotide biosynthesis pathway. This chain is Aspartate carbamoyltransferase catalytic subunit, found in Anaplasma marginale (strain St. Maries).